Consider the following 101-residue polypeptide: Small ribosomal subunit protein bS18c (101 aa).

It belongs to the bacterial ribosomal protein bS18 family. Part of the 30S ribosomal subunit.

It is found in the plastid. The protein resides in the chloroplast. The sequence is that of Small ribosomal subunit protein bS18c from Nymphaea alba (White water-lily).